The chain runs to 162 residues: 6,7-dimethyl-8-ribityllumazine synthase (162 aa).

5-amino-6-(D-ribitylamino)uracil-binding positions include F23, 61 to 63 (AYE), and 85 to 87 (AVI). 90 to 91 (DT) serves as a coordination point for (2S)-2-hydroxy-3-oxobutyl phosphate. The active-site Proton donor is H93. F118 provides a ligand contact to 5-amino-6-(D-ribitylamino)uracil. Residue R132 participates in (2S)-2-hydroxy-3-oxobutyl phosphate binding.

This sequence belongs to the DMRL synthase family.

The catalysed reaction is (2S)-2-hydroxy-3-oxobutyl phosphate + 5-amino-6-(D-ribitylamino)uracil = 6,7-dimethyl-8-(1-D-ribityl)lumazine + phosphate + 2 H2O + H(+). It participates in cofactor biosynthesis; riboflavin biosynthesis; riboflavin from 2-hydroxy-3-oxobutyl phosphate and 5-amino-6-(D-ribitylamino)uracil: step 1/2. Functionally, catalyzes the formation of 6,7-dimethyl-8-ribityllumazine by condensation of 5-amino-6-(D-ribitylamino)uracil with 3,4-dihydroxy-2-butanone 4-phosphate. This is the penultimate step in the biosynthesis of riboflavin. This is 6,7-dimethyl-8-ribityllumazine synthase from Synechococcus sp. (strain CC9902).